Here is a 270-residue protein sequence, read N- to C-terminus: Urease accessory protein UreD (270 aa).

This sequence belongs to the UreD family. UreD, UreF and UreG form a complex that acts as a GTP-hydrolysis-dependent molecular chaperone, activating the urease apoprotein by helping to assemble the nickel containing metallocenter of UreC. The UreE protein probably delivers the nickel.

Its subcellular location is the cytoplasm. In terms of biological role, required for maturation of urease via the functional incorporation of the urease nickel metallocenter. The chain is Urease accessory protein UreD from Klebsiella pneumoniae.